The sequence spans 477 residues: Glutamyl-tRNA reductase (477 aa).

Residues 49–52, serine 109, 114–116, and glutamine 120 each bind substrate; these read TCNR and EQQ. Cysteine 50 functions as the Nucleophile in the catalytic mechanism. 189-194 contacts NADP(+); sequence GAGAMG.

It belongs to the glutamyl-tRNA reductase family. As to quaternary structure, homodimer.

The enzyme catalyses (S)-4-amino-5-oxopentanoate + tRNA(Glu) + NADP(+) = L-glutamyl-tRNA(Glu) + NADPH + H(+). It participates in porphyrin-containing compound metabolism; protoporphyrin-IX biosynthesis; 5-aminolevulinate from L-glutamyl-tRNA(Glu): step 1/2. Functionally, catalyzes the NADPH-dependent reduction of glutamyl-tRNA(Glu) to glutamate 1-semialdehyde (GSA). The sequence is that of Glutamyl-tRNA reductase from Nocardia farcinica (strain IFM 10152).